Consider the following 100-residue polypeptide: Urease subunit gamma (100 aa).

It belongs to the urease gamma subunit family. In terms of assembly, heterotrimer of UreA (gamma), UreB (beta) and UreC (alpha) subunits. Three heterotrimers associate to form the active enzyme.

It is found in the cytoplasm. The enzyme catalyses urea + 2 H2O + H(+) = hydrogencarbonate + 2 NH4(+). The protein operates within nitrogen metabolism; urea degradation; CO(2) and NH(3) from urea (urease route): step 1/1. The chain is Urease subunit gamma from Thermosynechococcus vestitus (strain NIES-2133 / IAM M-273 / BP-1).